The chain runs to 231 residues: 26S proteasome non-ATPase regulatory subunit 10 (231 aa).

7 ANK repeats span residues Gly-3–Thr-36, Asp-37–Lys-69, Asp-70–Val-102, Asn-103–Lys-135, Asp-136–Gln-168, Asp-169–Glu-201, and Asn-202–Ser-226.

As to quaternary structure, part of transient complex containing PSMD10, PSMC4, PSMC5 and PAAF1 formed during the assembly of the 26S proteasome. Stays associated throughout the assembly of the PA700/19S RC and is released upon association with the 20S core. Interacts with PSMC4. Interacts with RB1. Interacts with CDK4. Interacts with MDM2. Interacts with RELA. Associates with a CDK4:CCND2 serine/threonine kinase complex. Interacts with ARHGDIA and increases the interaction between ARHGDIA and RHOA, hence promotes ARHGDIA inactivation of RHOA and ROCK.

It localises to the cytoplasm. It is found in the nucleus. Its function is as follows. Acts as a chaperone during the assembly of the 26S proteasome, specifically of the PA700/19S regulatory complex (RC). In the initial step of the base subcomplex assembly is part of an intermediate PSMD10:PSMC4:PSMC5:PAAF1 module which probably assembles with a PSMD5:PSMC2:PSMC1:PSMD2 module. Independently of the proteasome, regulates EGF-induced AKT activation through inhibition of the RHOA/ROCK/PTEN pathway, leading to prolonged AKT activation. Plays an important role in RAS-induced tumorigenesis. In terms of biological role, acts as an oncoprotein by being involved in negative regulation of tumor suppressors RB1 and p53/TP53. Overexpression is leading to phosphorylation of RB1 and proteasomal degradation of RB1. Regulates CDK4-mediated phosphorylation of RB1 by competing with CDKN2A for binding with CDK4. Facilitates binding of MDM2 to p53/TP53 and the mono- and polyubiquitination of p53/TP53 by MDM2 suggesting a function in targeting the TP53:MDM2 complex to the 26S proteasome. Involved in p53-independent apoptosis. Involved in regulation of NF-kappa-B by retaining it in the cytoplasm. Binds to the NF-kappa-B component RELA and accelerates its XPO1/CRM1-mediated nuclear export. The sequence is that of 26S proteasome non-ATPase regulatory subunit 10 (Psmd10) from Mus musculus (Mouse).